Reading from the N-terminus, the 102-residue chain is Small ribosomal subunit protein uS10 (102 aa).

This sequence belongs to the universal ribosomal protein uS10 family. Part of the 30S ribosomal subunit.

Its function is as follows. Involved in the binding of tRNA to the ribosomes. The protein is Small ribosomal subunit protein uS10 of Rhodopseudomonas palustris (strain HaA2).